A 572-amino-acid polypeptide reads, in one-letter code: DnaJ protein ERDJ3A (572 aa).

Positions 1–23 are cleaved as a signal peptide; the sequence is MVRTRLAISVVLVSTLLLLNVKA. A J domain is found at 27-91; sequence DPYKVLGVSK…EKRKNYDLYG (65 aa). Residues 394-423 are a coiled coil; it reads ITVKNLKSAVQELGKLLEGLEKKNKKVSSK. A disordered region spans residues 419–439; it reads KVSSKSQAGQAPNESSEKIPL. Residues 422 to 432 are compositionally biased toward polar residues; it reads SKSQAGQAPNE. Asparagine 431 carries an N-linked (GlcNAc...) asparagine glycan.

As to quaternary structure, interacts with BIP1 and BIP3. The interaction with BIP1 and BIP3 activates the ATPase enzyme activities of BIP1 and BIP3. Post-translationally, not N-glycosylated. In terms of tissue distribution, expressed in roots, leaves, stems, flowers, mature pollen grains and growing pollen tubes.

Its subcellular location is the endoplasmic reticulum lumen. In terms of biological role, regulates protein folding in the endoplasmic reticulum (ER) lumen. Functions probably as a co-molecular chaperone that is required for normal growth of pollen tubes under high-temperature stress. In Arabidopsis thaliana (Mouse-ear cress), this protein is DnaJ protein ERDJ3A (ERDJ3A).